The primary structure comprises 704 residues: Transmembrane protein DDB_G0274347 (704 aa).

Residues 37–145 are disordered; sequence VEQRDEVNDE…NNYNNNNTPT (109 aa). The segment covering 43–67 has biased composition (acidic residues); that stretch reads VNDEFQEEEEELEDDDDDEDDEDEI. A compositionally biased stretch (basic and acidic residues) spans 85–99; sequence HNDKEKEKKKDKQEE. A compositionally biased stretch (acidic residues) spans 100-113; sequence YIDSDDDDDDDGDE. The segment covering 114-142 has biased composition (low complexity); that stretch reads NYYLNNNNNNNNNINNNNNYNNNNYNNNN. N-linked (GlcNAc...) asparagine glycosylation occurs at N166. The helical transmembrane segment at 255-275 threads the bilayer; it reads ALISMALLISLVAIIFYLPLP. N354 is a glycosylation site (N-linked (GlcNAc...) asparagine). A run of 3 helical transmembrane segments spans residues 370 to 390, 414 to 434, and 513 to 533; these read LKIFGSCILFGVILFVVWLFA, TLLVIPLLSMLFWSLVLLYFI, and LVSFLWTIIVGSFIYHTFLIS. Residues 550–565 are compositionally biased toward low complexity; the sequence is TTTTTINTTTNTTSNT. A disordered region spans residues 550-576; it reads TTTTTINTTTNTTSNTSQQSNPLSKRL. 3 N-linked (GlcNAc...) asparagine glycosylation sites follow: N556, N560, and N564. A compositionally biased stretch (polar residues) spans 566 to 576; it reads SQQSNPLSKRL. 2 helical membrane passes run 609 to 629 and 638 to 658; these read FIIVFIWTIAASLLWIYGVPP and IFFIFIALAPLIKSIYNLIII.

The protein localises to the membrane. This is Transmembrane protein DDB_G0274347 from Dictyostelium discoideum (Social amoeba).